The chain runs to 448 residues: Selenide, water dikinase 2 (448 aa).

Ala2 bears the N-acetylalanine mark. Ser46 is modified (phosphoserine). Sec60 is an active-site residue. Sec60 is a non-standard amino acid (selenocysteine). Lys63 provides a ligand contact to ATP. The tract at residues Leu85–Gly107 is disordered. Phosphoserine is present on Ser97. ATP is bound by residues Gly118–Asp120, Asp138, Asp161, and Gly212–Thr215. Position 120 (Asp120) interacts with Mg(2+). Asp161 contacts Mg(2+). Asp316 is a binding site for Mg(2+).

The protein belongs to the selenophosphate synthase 1 family. Class I subfamily. In terms of assembly, homodimer. Mg(2+) is required as a cofactor. In terms of processing, truncated SEPHS2 proteins produced by failed UGA/Sec decoding are ubiquitinated by the CRL2(KLHDC3) complex, which recognizes the glycine (Gly) at the C-terminus of truncated SEPHS2 proteins.

The catalysed reaction is hydrogenselenide + ATP + H2O = selenophosphate + AMP + phosphate + 2 H(+). Synthesizes selenophosphate from selenide and ATP. The sequence is that of Selenide, water dikinase 2 (SEPHS2) from Homo sapiens (Human).